Here is a 244-residue protein sequence, read N- to C-terminus: 5-oxoprolinase subunit A (244 aa).

This sequence belongs to the LamB/PxpA family. In terms of assembly, forms a complex composed of PxpA, PxpB and PxpC.

The catalysed reaction is 5-oxo-L-proline + ATP + 2 H2O = L-glutamate + ADP + phosphate + H(+). Catalyzes the cleavage of 5-oxoproline to form L-glutamate coupled to the hydrolysis of ATP to ADP and inorganic phosphate. This chain is 5-oxoprolinase subunit A, found in Escherichia coli O157:H7.